A 367-amino-acid polypeptide reads, in one-letter code: Fructose-1,6-bisphosphatase class 1 3 (367 aa).

It belongs to the FBPase class 1 family. In terms of assembly, homotetramer.

It is found in the cytoplasm. It carries out the reaction beta-D-fructose 1,6-bisphosphate + H2O = beta-D-fructose 6-phosphate + phosphate. Its pathway is carbohydrate biosynthesis; gluconeogenesis. The protein is Fructose-1,6-bisphosphatase class 1 3 of Paraburkholderia phymatum (strain DSM 17167 / CIP 108236 / LMG 21445 / STM815) (Burkholderia phymatum).